A 435-amino-acid polypeptide reads, in one-letter code: Chaperone SurA (435 aa).

Positions 1–29 (MINKTLHTKHTLLGLLAMAVLMIPVWSQA) are cleaved as a signal peptide. PpiC domains are found at residues 180-281 (QEDF…KMID) and 290-390 (VTQY…RVDD).

The protein localises to the periplasm. It carries out the reaction [protein]-peptidylproline (omega=180) = [protein]-peptidylproline (omega=0). In terms of biological role, chaperone involved in the correct folding and assembly of outer membrane proteins. Recognizes specific patterns of aromatic residues and the orientation of their side chains, which are found more frequently in integral outer membrane proteins. May act in both early periplasmic and late outer membrane-associated steps of protein maturation. In Alcanivorax borkumensis (strain ATCC 700651 / DSM 11573 / NCIMB 13689 / SK2), this protein is Chaperone SurA.